Reading from the N-terminus, the 49-residue chain is QEEPCATGPCCRRCKFKRAGKVCRVARGDWNDDYCTGKSCDCPKNPWNG.

In terms of domain architecture, Disintegrin spans 1–49; sequence QEEPCATGPCCRRCKFKRAGKVCRVARGDWNDDYCTGKSCDCPKNPWNG. 4 disulfide bridges follow: Cys5/Cys14, Cys10/Cys35, Cys11/Cys40, and Cys23/Cys42. Positions 27–29 match the Cell attachment site motif; the sequence is RGD.

The protein belongs to the venom metalloproteinase (M12B) family. P-II subfamily. P-IIa sub-subfamily. In terms of assembly, monomer. In terms of tissue distribution, expressed by the venom gland.

It localises to the secreted. In terms of biological role, is a potent inhibitor of ADP-induced platelet aggregation. Acts by binding to alpha-IIb/beta-3 (ITGA2B/ITGB3) receptor on the platelet surface. Binds with the same high affinity to resting and activated platelets. Also binds the alpha-4/beta-1 (ITGA4/ITGB1) integrin. Is a potent inhibitor of human and murine melanoma metastases in mouse model systems, also due to the inhibition of binding between the alpha-4/beta-1 integrin and the vascular cell adhesion protein VCAM1. Reacts neither with the integrin alpha-V/beta-3 (ITGAV/ITGB3) vitronectin receptor nor with the integrin alpha-5/beta-1 (ITGA5/ITGB1) fibronectin receptor. Has no effect on cell proliferation or angiogenesis. Specifically inhibits cell migration on fibronectin, but not that on collagen IV or laminin. May involve fibronectin-binding integrins that mediate cell migration. This Eristicophis macmahoni (Leaf-nosed viper) protein is Disintegrin eristostatin.